We begin with the raw amino-acid sequence, 822 residues long: Nuclear factor of activated T-cells, cytoplasmic 1 (822 aa).

The calcineurin-binding stretch occupies residues 110–115; the sequence is PRIEIT. Residues 118–210 are transactivation domain A (TAD-A); the sequence is LGLHHNNGQF…CVSPKTTDPE (93 aa). Residues 192 to 206 are compositionally biased toward polar residues; that stretch reads PQTSPWQSPCVSPKT. A disordered region spans residues 192–289; sequence PQTSPWQSPC…HSSPRVSVTD (98 aa). Tandem repeats lie at residues 195–211 and 225–241. Positions 195–290 are 3 X SP repeats; sequence SPWQSPCVSP…SSPRVSVTDD (96 aa). A phosphoserine mark is found at Ser-225 and Ser-229. A compositionally biased stretch (low complexity) spans 225–242; that stretch reads SPRHSPSTSPRTSVTEES. Position 237 is a phosphoserine; by PKA (Ser-237). The short motif at 257 to 259 is the Nuclear localization signal element; sequence KRK. Repeat unit 3 spans residues 274–290; sequence SPTPSPHSSPRVSVTDD. Residue Ser-286 is modified to Phosphoserine; by PKA. Positions 302–313 match the Nuclear export signal motif; that stretch reads SAIVAAINALST. One can recognise an RHD domain in the interval 400 to 582; it reads PSLPALDWQL…NPIECSQRSA (183 aa). Residues 429 to 436 mediate DNA binding; that stretch reads RAHYETEG. Positions 672-674 match the Nuclear localization signal motif; that stretch reads KRK. The interval 772–822 is disordered; it reads GPGHLGLQRPAGGVLGGQEAPRPGGPHPGAPQLHPLNLSQSIVTRLTEPQP. Residues 808-822 show a composition bias toward polar residues; it reads NLSQSIVTRLTEPQP.

In terms of assembly, member of the multicomponent NFATC transcription complex that consists of at least two components, a pre-existing cytoplasmic component NFATC2 and an inducible nuclear component NFATC1. Other members such as NFATC4, NFATC3 or members of the activating protein-1 family, MAF, GATA4 and Cbp/p300 can also bind the complex. NFATC proteins bind to DNA as monomers. Interacts with HOMER2 and HOMER3; this interaction may compete with calcineurin/PPP3CA-binding and hence prevent NFATC1 dephosphorylation and activation. Interacts with TLE6/GRG6. In terms of processing, phosphorylated by NFATC-kinase and GSK3B; phosphorylation induces NFATC1 nuclear exit and dephosphorylation by calcineurin promotes nuclear import. Phosphorylation by PKA and DYRK2 negatively modulates nuclear accumulation, and promotes subsequent phosphorylation by GSK3B or casein kinase 1.

The protein resides in the cytoplasm. It is found in the nucleus. Functionally, plays a role in the inducible expression of cytokine genes in T-cells, especially in the induction of the IL-2 or IL-4 gene transcription. Also controls gene expression in embryonic cardiac cells. Could regulate not only the activation and proliferation but also the differentiation and programmed death of T-lymphocytes as well as lymphoid and non-lymphoid cells. Required for osteoclastogenesis and regulates many genes important for osteoclast differentiation and function. This is Nuclear factor of activated T-cells, cytoplasmic 1 (NFATC1) from Sus scrofa (Pig).